The primary structure comprises 616 residues: ATP-dependent zinc metalloprotease FtsH (616 aa).

The Cytoplasmic portion of the chain corresponds to 1 to 8 (MRNLFKTA). Residues 9-29 (TIYILIALVILLLVDIFSGGL) traverse the membrane as a helical segment. Residues 30 to 114 (SYNQFFSNLS…VTKEPPQVPW (85 aa)) are Extracellular-facing. Residues 115–135 (WLSTFLPMLIFAGLMIFVWIF) traverse the membrane as a helical segment. Residues 136-616 (MLQQTQGGGS…VFEDAQPQLV (481 aa)) lie on the Cytoplasmic side of the membrane. 208–215 (GPPGTGKT) contributes to the ATP binding site. H430 lines the Zn(2+) pocket. E431 is a catalytic residue. H434 and D506 together coordinate Zn(2+).

It in the central section; belongs to the AAA ATPase family. This sequence in the C-terminal section; belongs to the peptidase M41 family. In terms of assembly, homohexamer. Zn(2+) serves as cofactor.

It localises to the cell membrane. Acts as a processive, ATP-dependent zinc metallopeptidase for both cytoplasmic and membrane proteins. Plays a role in the quality control of integral membrane proteins. The polypeptide is ATP-dependent zinc metalloprotease FtsH (Caldicellulosiruptor bescii (strain ATCC BAA-1888 / DSM 6725 / KCTC 15123 / Z-1320) (Anaerocellum thermophilum)).